A 115-amino-acid polypeptide reads, in one-letter code: Aspartate 1-decarboxylase (115 aa).

Ser-25 (schiff-base intermediate with substrate; via pyruvic acid) is an active-site residue. Ser-25 carries the post-translational modification Pyruvic acid (Ser). Thr-57 lines the substrate pocket. Tyr-58 functions as the Proton donor in the catalytic mechanism. Substrate is bound at residue 73–75 (GAA).

Belongs to the PanD family. As to quaternary structure, heterooctamer of four alpha and four beta subunits. Pyruvate is required as a cofactor. Post-translationally, is synthesized initially as an inactive proenzyme, which is activated by self-cleavage at a specific serine bond to produce a beta-subunit with a hydroxyl group at its C-terminus and an alpha-subunit with a pyruvoyl group at its N-terminus.

It is found in the cytoplasm. The catalysed reaction is L-aspartate + H(+) = beta-alanine + CO2. It participates in cofactor biosynthesis; (R)-pantothenate biosynthesis; beta-alanine from L-aspartate: step 1/1. Functionally, catalyzes the pyruvoyl-dependent decarboxylation of aspartate to produce beta-alanine. The sequence is that of Aspartate 1-decarboxylase from Kosmotoga olearia (strain ATCC BAA-1733 / DSM 21960 / TBF 19.5.1).